We begin with the raw amino-acid sequence, 294 residues long: Tetraspanin-15 (294 aa).

Over 1 to 23 (MPRGDSEQVRYCARFSYLWLKFS) the chain is Cytoplasmic. The helical transmembrane segment at 24–44 (LVIYSTVFWLIGGLVLSVGIY) threads the bilayer. The Extracellular portion of the chain corresponds to 45–62 (AEVERQKYKTLESAFLAP). A helical transmembrane segment spans residues 63 to 83 (AIILILLGVVMFIVSFIGVLA). Topologically, residues 84–93 (SLRDNLCLLQ) are cytoplasmic. A helical transmembrane segment spans residues 94 to 114 (AFMYILGICLIIELIGGVVAL). The Extracellular segment spans residues 115–235 (IFRNQTIDFL…WFTDNYTIMA (121 aa)). Asparagine 118 carries an N-linked (GlcNAc...) asparagine glycan. 4 cysteine pairs are disulfide-bonded: cysteine 154–cysteine 219, cysteine 155–cysteine 185, cysteine 171–cysteine 179, and cysteine 186–cysteine 198. N-linked (GlcNAc...) asparagine glycans are attached at residues asparagine 189 and asparagine 230. Residues 236 to 256 (GVLLGILLPQFLGVLLTFLYI) form a helical membrane-spanning segment. The Cytoplasmic portion of the chain corresponds to 257–294 (TRVEDIITEHSVTDGLLGPGTKAGVEAAGTGCCMCYPI).

Belongs to the tetraspanin (TM4SF) family. As to quaternary structure, interacts with ADAM10; the interaction influences ADAM10 substrate specificity, endocytosis and turnover. In terms of processing, palmitoylated.

It is found in the cell membrane. The protein resides in the late endosome membrane. Its function is as follows. Part of TspanC8 subgroup, composed of 6 members that interact with the transmembrane metalloprotease ADAM10. This interaction is required for ADAM10 exit from the endoplasmic reticulum and for enzymatic maturation and trafficking to the cell surface as well as substrate specificity. Different TspanC8/ADAM10 complexes have distinct substrates. Promotes ADAM10-mediated cleavage of CDH2. Negatively regulates ligand-induced Notch activity probably by regulating ADAM10 activity. This Bos taurus (Bovine) protein is Tetraspanin-15 (TSPAN15).